Consider the following 261-residue polypeptide: Ubiquinone biosynthesis O-methyltransferase (261 aa).

The interval 1 to 22 (MTMQVDPSANSSAASSAAPGTT) is disordered. A compositionally biased stretch (low complexity) spans 8-18 (SANSSAASSAA). The S-adenosyl-L-methionine site is built by Arg-55, Gly-86, Asp-107, and Met-149.

It belongs to the methyltransferase superfamily. UbiG/COQ3 family.

It carries out the reaction a 3-demethylubiquinol + S-adenosyl-L-methionine = a ubiquinol + S-adenosyl-L-homocysteine + H(+). It catalyses the reaction a 3-(all-trans-polyprenyl)benzene-1,2-diol + S-adenosyl-L-methionine = a 2-methoxy-6-(all-trans-polyprenyl)phenol + S-adenosyl-L-homocysteine + H(+). It functions in the pathway cofactor biosynthesis; ubiquinone biosynthesis. Its function is as follows. O-methyltransferase that catalyzes the 2 O-methylation steps in the ubiquinone biosynthetic pathway. This chain is Ubiquinone biosynthesis O-methyltransferase, found in Nitrobacter winogradskyi (strain ATCC 25391 / DSM 10237 / CIP 104748 / NCIMB 11846 / Nb-255).